The chain runs to 230 residues: Demethylmenaquinone methyltransferase (230 aa).

Residues Thr-62, Asp-80, 100–101 (DG), and Ser-117 each bind S-adenosyl-L-methionine.

The protein belongs to the class I-like SAM-binding methyltransferase superfamily. MenG/UbiE family.

It carries out the reaction a 2-demethylmenaquinol + S-adenosyl-L-methionine = a menaquinol + S-adenosyl-L-homocysteine + H(+). It participates in quinol/quinone metabolism; menaquinone biosynthesis; menaquinol from 1,4-dihydroxy-2-naphthoate: step 2/2. Methyltransferase required for the conversion of demethylmenaquinol (DMKH2) to menaquinol (MKH2). The chain is Demethylmenaquinone methyltransferase from Corynebacterium glutamicum (strain R).